Here is a 402-residue protein sequence, read N- to C-terminus: Phosphoglycerate kinase (402 aa).

Substrate-binding positions include 29-31 (DFN), arginine 45, 69-72 (HLGR), arginine 125, and arginine 158. ATP contacts are provided by residues lysine 209, glutamate 331, and 357–360 (GGDT).

Belongs to the phosphoglycerate kinase family.

The protein localises to the cytoplasm. It carries out the reaction (2R)-3-phosphoglycerate + ATP = (2R)-3-phospho-glyceroyl phosphate + ADP. The protein operates within carbohydrate degradation; glycolysis; pyruvate from D-glyceraldehyde 3-phosphate: step 2/5. This is Phosphoglycerate kinase (pgk) from Helicobacter pylori (strain ATCC 700392 / 26695) (Campylobacter pylori).